The following is a 428-amino-acid chain: Cell division protein DamX (428 aa).

The interval 1-99 (MDEFKPEDEL…KRKKAASKPA (99 aa)) is disordered. Over 1-103 (MDEFKPEDEL…AASKPASRQY (103 aa)) the chain is Cytoplasmic. Basic and acidic residues-rich tracts occupy residues 7–36 (EDEL…ERGE) and 50–64 (DDRR…RNEE). Residues 55–87 (TRAQKERNEEPEIEEEIDESEDETVDEERVERR) are a coiled coil. Positions 65 to 82 (PEIEEEIDESEDETVDEE) are enriched in acidic residues. The span at 86–95 (RRPRKRKKAA) shows a compositional bias: basic residues. A helical transmembrane segment spans residues 104-124 (MMMGVGILVLLLLIIGIGSAL). Residues 125 to 428 (KAPSTTSSDQ…PLRQVQADLK (304 aa)) are Periplasmic-facing. Disordered regions lie at residues 149 to 190 (TDQA…VATD) and 226 to 344 (EPAT…KSAP). Positions 236 to 257 (GNASRDTAKTQTAERPSTTRPA) are enriched in polar residues. Low complexity predominate over residues 288-334 (PAAPVASTKAPAATSTPAPKETATTAPVQTASPAQTTATPAAGAKTA). The SPOR domain maps to 342 to 419 (SAPSSHYTLQ…VQAKNPWAKP (78 aa)).

This sequence belongs to the DamX family. As to quaternary structure, interacts in vitro with multiple Fts proteins, including FtsQ and FtsN.

It localises to the cell inner membrane. Its function is as follows. Non-essential cell division protein. In Escherichia coli (strain K12), this protein is Cell division protein DamX.